A 257-amino-acid polypeptide reads, in one-letter code: Imidazole glycerol phosphate synthase subunit HisF (257 aa).

Residues D11 and D130 contribute to the active site.

The protein belongs to the HisA/HisF family. As to quaternary structure, heterodimer of HisH and HisF.

The protein resides in the cytoplasm. The catalysed reaction is 5-[(5-phospho-1-deoxy-D-ribulos-1-ylimino)methylamino]-1-(5-phospho-beta-D-ribosyl)imidazole-4-carboxamide + L-glutamine = D-erythro-1-(imidazol-4-yl)glycerol 3-phosphate + 5-amino-1-(5-phospho-beta-D-ribosyl)imidazole-4-carboxamide + L-glutamate + H(+). It participates in amino-acid biosynthesis; L-histidine biosynthesis; L-histidine from 5-phospho-alpha-D-ribose 1-diphosphate: step 5/9. Its function is as follows. IGPS catalyzes the conversion of PRFAR and glutamine to IGP, AICAR and glutamate. The HisF subunit catalyzes the cyclization activity that produces IGP and AICAR from PRFAR using the ammonia provided by the HisH subunit. The chain is Imidazole glycerol phosphate synthase subunit HisF from Vibrio parahaemolyticus serotype O3:K6 (strain RIMD 2210633).